Consider the following 220-residue polypeptide: MSTLHKVKAYFGMAPMDDYDDEYYEDDDRAERGAARGYARRPREDRFEEEGYIDRAGREYDDRPAPREYDEPPIYRGGYDEPRFDPRLRGPREFERPAPRLGALRGSTRGALAMDPRRMAMLFEEGSPLAKITTLRPKDYSEARTIGEKFRDGTPVIMDLVSMDNADAKRLVDFAAGLAFALRGSFDKVATKVFLLSPADVDVTADERRRIAEAGFYAYQ.

The tract at residues 33-82 is disordered; it reads GAARGYARRPREDRFEEEGYIDRAGREYDDRPAPREYDEPPIYRGGYDEP. Residues 52–70 are compositionally biased toward basic and acidic residues; that stretch reads YIDRAGREYDDRPAPREYD.

The protein belongs to the SepF family. Homodimer. Interacts with FtsZ.

It localises to the cytoplasm. In terms of biological role, cell division protein that is part of the divisome complex and is recruited early to the Z-ring. Probably stimulates Z-ring formation, perhaps through the cross-linking of FtsZ protofilaments. Its function overlaps with FtsA. The sequence is that of Cell division protein SepF from Mycobacterium sp. (strain JLS).